Here is a 155-residue protein sequence, read N- to C-terminus: Transcriptional repressor NrdR (155 aa).

Over residues Met-1 to Ser-10 the composition is skewed to basic residues. The tract at residues Met-1–Gly-21 is disordered. Residues Cys-3–Cys-34 fold into a zinc finger. The ATP-cone domain occupies Leu-49 to Val-139.

This sequence belongs to the NrdR family. It depends on Zn(2+) as a cofactor.

Functionally, negatively regulates transcription of bacterial ribonucleotide reductase nrd genes and operons by binding to NrdR-boxes. This Lacticaseibacillus casei (strain BL23) (Lactobacillus casei) protein is Transcriptional repressor NrdR.